A 440-amino-acid chain; its full sequence is Glutamyl-tRNA reductase (440 aa).

Substrate is bound by residues 47-50 (TCNR), Ser-110, 115-117 (ERE), and Gln-121. Cys-48 acts as the Nucleophile in catalysis. 192-197 (GTGAYA) provides a ligand contact to NADP(+).

It belongs to the glutamyl-tRNA reductase family. In terms of assembly, homodimer.

It catalyses the reaction (S)-4-amino-5-oxopentanoate + tRNA(Glu) + NADP(+) = L-glutamyl-tRNA(Glu) + NADPH + H(+). It participates in porphyrin-containing compound metabolism; protoporphyrin-IX biosynthesis; 5-aminolevulinate from L-glutamyl-tRNA(Glu): step 1/2. Its function is as follows. Catalyzes the NADPH-dependent reduction of glutamyl-tRNA(Glu) to glutamate 1-semialdehyde (GSA). This chain is Glutamyl-tRNA reductase, found in Paenarthrobacter aurescens (strain TC1).